Here is a 184-residue protein sequence, read N- to C-terminus: Bifunctional protein PyrR (184 aa).

The short motif at 99–111 (IVLVDDVLYTGRT) is the PRPP-binding element.

Belongs to the purine/pyrimidine phosphoribosyltransferase family. PyrR subfamily. In terms of assembly, homodimer and homohexamer; in equilibrium.

The enzyme catalyses UMP + diphosphate = 5-phospho-alpha-D-ribose 1-diphosphate + uracil. In terms of biological role, regulates transcriptional attenuation of the pyrimidine nucleotide (pyr) operon by binding in a uridine-dependent manner to specific sites on pyr mRNA. This disrupts an antiterminator hairpin in the RNA and favors formation of a downstream transcription terminator, leading to a reduced expression of downstream genes. Functionally, also displays a weak uracil phosphoribosyltransferase activity which is not physiologically significant. The chain is Bifunctional protein PyrR from Acetivibrio thermocellus (strain ATCC 27405 / DSM 1237 / JCM 9322 / NBRC 103400 / NCIMB 10682 / NRRL B-4536 / VPI 7372) (Clostridium thermocellum).